A 394-amino-acid polypeptide reads, in one-letter code: Quinolinate synthase (394 aa).

The iminosuccinate site is built by H57 and S74. [4Fe-4S] cluster is bound at residue C121. Iminosuccinate contacts are provided by residues 153-155 and S174; that span reads YMN. C250 is a [4Fe-4S] cluster binding site. Iminosuccinate is bound by residues 276-278 and T293; that span reads HPE. Residue C340 coordinates [4Fe-4S] cluster.

It belongs to the quinolinate synthase family. Type 3 subfamily. The cofactor is [4Fe-4S] cluster.

The protein localises to the cytoplasm. It catalyses the reaction iminosuccinate + dihydroxyacetone phosphate = quinolinate + phosphate + 2 H2O + H(+). Its pathway is cofactor biosynthesis; NAD(+) biosynthesis; quinolinate from iminoaspartate: step 1/1. In terms of biological role, catalyzes the condensation of iminoaspartate with dihydroxyacetone phosphate to form quinolinate. This chain is Quinolinate synthase, found in Nocardioides sp. (strain ATCC BAA-499 / JS614).